A 126-amino-acid polypeptide reads, in one-letter code: MARIAGVDLPRDKRVEIGLTYIYGIGLSRSQEIIAATGVNPDTRVKDLSDADVAALRGEVESNYQVEGDLRRLEAMNIKRLVDIGTYRGRRHRMGLPVRGQRTRTNARTRRGRRQTVAGKKKAPGK.

Residues 92–126 (HRMGLPVRGQRTRTNARTRRGRRQTVAGKKKAPGK) form a disordered region. Basic residues predominate over residues 101–126 (QRTRTNARTRRGRRQTVAGKKKAPGK).

Belongs to the universal ribosomal protein uS13 family. Part of the 30S ribosomal subunit. Forms a loose heterodimer with protein S19. Forms two bridges to the 50S subunit in the 70S ribosome.

In terms of biological role, located at the top of the head of the 30S subunit, it contacts several helices of the 16S rRNA. In the 70S ribosome it contacts the 23S rRNA (bridge B1a) and protein L5 of the 50S subunit (bridge B1b), connecting the 2 subunits; these bridges are implicated in subunit movement. Contacts the tRNAs in the A and P-sites. The protein is Small ribosomal subunit protein uS13 of Nostoc sp. (strain PCC 7120 / SAG 25.82 / UTEX 2576).